The following is a 345-amino-acid chain: Molybdopterin synthase catalytic subunit (345 aa).

Residues 101–102 (HR), K117, and 124–126 (KKE) each bind substrate.

The protein belongs to the MoaE family. MOCS2B subfamily. Heterotetramer; composed of 2 small (Mocs2A) and 2 large (Mocs2B) subunits.

It is found in the cytoplasm. The enzyme catalyses 2 [molybdopterin-synthase sulfur-carrier protein]-C-terminal-Gly-aminoethanethioate + cyclic pyranopterin phosphate + H2O = molybdopterin + 2 [molybdopterin-synthase sulfur-carrier protein]-C-terminal Gly-Gly + 2 H(+). The protein operates within cofactor biosynthesis; molybdopterin biosynthesis. Catalytic subunit of the molybdopterin synthase complex, a complex that catalyzes the conversion of precursor Z into molybdopterin. Acts by mediating the incorporation of 2 sulfur atoms from thiocarboxylated Mocs2A into precursor Z to generate a dithiolene group. This Drosophila virilis (Fruit fly) protein is Molybdopterin synthase catalytic subunit.